Consider the following 1277-residue polypeptide: Sister chromatid cohesion protein PDS5 (1277 aa).

Residues 393-429 (NITNKAIYTSLLHLAREKHKEVRELCINTMAKFYSNS) form an HEAT repeat. The segment at 1201–1277 (HENNESQKKK…DDEDDDIEMT (77 aa)) is disordered. Positions 1208–1217 (KKKKKVHHAR) are enriched in basic residues. The segment covering 1221 to 1237 (DDEEGDGDRESDSDDDS) has biased composition (acidic residues). Phosphoserine occurs at positions 1231 and 1233. A compositionally biased stretch (basic and acidic residues) spans 1244 to 1254 (NETKKGHENIV). The span at 1266 to 1277 (YKDDEDDDIEMT) shows a compositional bias: acidic residues.

It belongs to the PDS5 family. Acetylated by ECO1.

The protein localises to the nucleus. Its function is as follows. Essential for the establishment and maintenance of sister chromatid cohesion at centromere proximal and distal regions during S phase. Also required for chromosomal condensation. This is Sister chromatid cohesion protein PDS5 (PDS5) from Saccharomyces cerevisiae (strain ATCC 204508 / S288c) (Baker's yeast).